The chain runs to 223 residues: MTQDQLKQAVAQAAVDFILPKLDDKSIVGVGTGSTANCFIDALAKHKAAFDGAVASSQATAARLKAHGIPVYELNTVSDLEFYVDGADESDEHLNLIKGGGAALTREKIVAAVANTFICIADGSKLVPVLGAFPLPVEVIPMARSHVARQLVKLGGDPVYREGVLTDNGNIIIDVHNMSITNPVELEAQINAIVGVVTNGLFAARPADLLLLGTAEGVKTLTR.

Substrate contacts are provided by residues 32 to 35, 85 to 88, and 98 to 101; these read TGST, DGAD, and KGGG. Glu107 (proton acceptor) is an active-site residue. Lys125 is a substrate binding site.

It belongs to the ribose 5-phosphate isomerase family. Homodimer.

The enzyme catalyses aldehydo-D-ribose 5-phosphate = D-ribulose 5-phosphate. It functions in the pathway carbohydrate degradation; pentose phosphate pathway; D-ribose 5-phosphate from D-ribulose 5-phosphate (non-oxidative stage): step 1/1. Its function is as follows. Catalyzes the reversible conversion of ribose-5-phosphate to ribulose 5-phosphate. The chain is Ribose-5-phosphate isomerase A from Pseudomonas syringae pv. syringae (strain B728a).